Reading from the N-terminus, the 336-residue chain is MAVIYYDKDADLELIRDKKIAIIGYGSQGHAHALNLKDSGLNVVVGLREGSKSWKKAEEQGLTVKAIEEAAKEADIIMMLIPDENQPEIYKKYIEKHLTEGKMLMFAHGFNIHYHQIIPPKNVDVTMIAPKSPGHIVRREYVEGRGVPALVAVYQDYTGKAKDIALAYAKGIGVTRAGVIETTFKEETETDLFGEQAVLCGGVTALIKAGFETLVEAGYQPEIAYFECLNELKLIVDLIYEGGLSFMRYSVSNTAEYGDYISQEKIVTKEVRENMKQMLKDIQTGKFAKDWILENQAGRPYFYTMRKKESEHLIEKVGKELRKMMPWLKERNVDEE.

The KARI N-terminal Rossmann domain occupies 1–182 (MAVIYYDKDA…GVTRAGVIET (182 aa)). NADP(+) is bound by residues 25 to 28 (YGSQ), arginine 48, serine 51, serine 53, and 83 to 86 (DENQ). The active site involves histidine 108. Glycine 134 is a binding site for NADP(+). Residues 183-328 (TFKEETETDL…KELRKMMPWL (146 aa)) form the KARI C-terminal knotted domain. Mg(2+) is bound by residues aspartate 191, glutamate 195, glutamate 227, and glutamate 231. Serine 252 lines the substrate pocket.

This sequence belongs to the ketol-acid reductoisomerase family. Mg(2+) serves as cofactor.

The catalysed reaction is (2R)-2,3-dihydroxy-3-methylbutanoate + NADP(+) = (2S)-2-acetolactate + NADPH + H(+). The enzyme catalyses (2R,3R)-2,3-dihydroxy-3-methylpentanoate + NADP(+) = (S)-2-ethyl-2-hydroxy-3-oxobutanoate + NADPH + H(+). The protein operates within amino-acid biosynthesis; L-isoleucine biosynthesis; L-isoleucine from 2-oxobutanoate: step 2/4. It participates in amino-acid biosynthesis; L-valine biosynthesis; L-valine from pyruvate: step 2/4. Involved in the biosynthesis of branched-chain amino acids (BCAA). Catalyzes an alkyl-migration followed by a ketol-acid reduction of (S)-2-acetolactate (S2AL) to yield (R)-2,3-dihydroxy-isovalerate. In the isomerase reaction, S2AL is rearranged via a Mg-dependent methyl migration to produce 3-hydroxy-3-methyl-2-ketobutyrate (HMKB). In the reductase reaction, this 2-ketoacid undergoes a metal-dependent reduction by NADPH to yield (R)-2,3-dihydroxy-isovalerate. In Thermotoga petrophila (strain ATCC BAA-488 / DSM 13995 / JCM 10881 / RKU-1), this protein is Ketol-acid reductoisomerase (NADP(+)).